We begin with the raw amino-acid sequence, 243 residues long: Ubiquinone biosynthesis O-methyltransferase (243 aa).

S-adenosyl-L-methionine-binding residues include arginine 44, glycine 64, aspartate 85, and methionine 129.

It belongs to the methyltransferase superfamily. UbiG/COQ3 family.

It carries out the reaction a 3-demethylubiquinol + S-adenosyl-L-methionine = a ubiquinol + S-adenosyl-L-homocysteine + H(+). The catalysed reaction is a 3-(all-trans-polyprenyl)benzene-1,2-diol + S-adenosyl-L-methionine = a 2-methoxy-6-(all-trans-polyprenyl)phenol + S-adenosyl-L-homocysteine + H(+). It participates in cofactor biosynthesis; ubiquinone biosynthesis. Its function is as follows. O-methyltransferase that catalyzes the 2 O-methylation steps in the ubiquinone biosynthetic pathway. The sequence is that of Ubiquinone biosynthesis O-methyltransferase from Erwinia tasmaniensis (strain DSM 17950 / CFBP 7177 / CIP 109463 / NCPPB 4357 / Et1/99).